The sequence spans 296 residues: Protoheme IX farnesyltransferase (296 aa).

Over 1 to 9 (MMFKQYLQV) the chain is Cytoplasmic. A helical transmembrane segment spans residues 10–28 (TKPGIIFGNLISVIGGFLL). The Periplasmic portion of the chain corresponds to 29 to 37 (ASKGSIDYP). Residues 38-56 (LFIYTLVGVSLVVASGCVF) traverse the membrane as a helical segment. Residues 57–78 (NNYIDRDIDRKMERTKNRVLVK) lie on the Cytoplasmic side of the membrane. A helical membrane pass occupies residues 79–97 (GLISPGVSLVYATLLGIAG). The Periplasmic portion of the chain corresponds to 98–107 (FMLLWFGANP). A helical transmembrane segment spans residues 108 to 126 (LACWLGVMGFVVYVGVYSL). Over 127-197 (YMKRHSVYGT…YQAANIPVLP (71 aa)) the chain is Cytoplasmic. The chain crosses the membrane as a helical span at residues 198-216 (VVKGISVAKNHITLYIIAF). The Periplasmic segment spans residues 217 to 228 (AVATLMLTLGGY). Residues 229–247 (AGYKYLVVAAAVSVWWLGM) form a helical membrane-spanning segment. Residues 248-268 (ALRGYKVEDDKVWARKLFGFS) lie on the Cytoplasmic side of the membrane. The helical transmembrane segment at 269–287 (IIAITALSIMMSVDFMVPN) threads the bilayer. Residues 288-296 (SQNLLTYVW) are Periplasmic-facing.

Belongs to the UbiA prenyltransferase family. Protoheme IX farnesyltransferase subfamily.

It is found in the cell inner membrane. The enzyme catalyses heme b + (2E,6E)-farnesyl diphosphate + H2O = Fe(II)-heme o + diphosphate. It participates in porphyrin-containing compound metabolism; heme O biosynthesis; heme O from protoheme: step 1/1. Converts heme B (protoheme IX) to heme O by substitution of the vinyl group on carbon 2 of heme B porphyrin ring with a hydroxyethyl farnesyl side group. This is Protoheme IX farnesyltransferase from Salmonella typhimurium (strain LT2 / SGSC1412 / ATCC 700720).